Here is a 99-residue protein sequence, read N- to C-terminus: uncharacterized protein (99 aa).

This is an uncharacterized protein from Vibrio alginolyticus.